The primary structure comprises 325 residues: DNA-directed RNA polymerase subunit alpha (325 aa).

An alpha N-terminal domain (alpha-NTD) region spans residues 1 to 238 (MSLKSLLKGF…EHLTVFINFE (238 aa)). The tract at residues 254–325 (KLKASLSKHV…LGLSFGMRDF (72 aa)) is alpha C-terminal domain (alpha-CTD).

It belongs to the RNA polymerase alpha chain family. Homodimer. The RNAP catalytic core consists of 2 alpha, 1 beta, 1 beta' and 1 omega subunit. When a sigma factor is associated with the core the holoenzyme is formed, which can initiate transcription.

It catalyses the reaction RNA(n) + a ribonucleoside 5'-triphosphate = RNA(n+1) + diphosphate. DNA-dependent RNA polymerase catalyzes the transcription of DNA into RNA using the four ribonucleoside triphosphates as substrates. This chain is DNA-directed RNA polymerase subunit alpha, found in Leptospira borgpetersenii serovar Hardjo-bovis (strain JB197).